A 471-amino-acid polypeptide reads, in one-letter code: ATP synthase subunit beta (471 aa).

Residue 156-163 (GGAGVGKT) participates in ATP binding.

The protein belongs to the ATPase alpha/beta chains family. As to quaternary structure, F-type ATPases have 2 components, CF(1) - the catalytic core - and CF(0) - the membrane proton channel. CF(1) has five subunits: alpha(3), beta(3), gamma(1), delta(1), epsilon(1). CF(0) has three main subunits: a(1), b(2) and c(9-12). The alpha and beta chains form an alternating ring which encloses part of the gamma chain. CF(1) is attached to CF(0) by a central stalk formed by the gamma and epsilon chains, while a peripheral stalk is formed by the delta and b chains.

It localises to the cell membrane. It carries out the reaction ATP + H2O + 4 H(+)(in) = ADP + phosphate + 5 H(+)(out). Its function is as follows. Produces ATP from ADP in the presence of a proton gradient across the membrane. The catalytic sites are hosted primarily by the beta subunits. The sequence is that of ATP synthase subunit beta from Mycoplasmoides gallisepticum (strain R(low / passage 15 / clone 2)) (Mycoplasma gallisepticum).